A 654-amino-acid polypeptide reads, in one-letter code: DNA-directed RNA polymerase III subunit RPC3 (654 aa).

The residue at position 27 (T27) is a Phosphothreonine. 2 disordered regions span residues L381–P401 and K422–H448. S392 and S394 each carry phosphoserine. Residues D429–T444 are compositionally biased toward acidic residues. The interval L581–L602 is leucine-zipper.

The protein belongs to the RNA polymerase beta chain family. Component of the RNA polymerase III (Pol III) complex consisting of 17 subunits.

Its subcellular location is the cytoplasm. It is found in the nucleus. Functionally, DNA-dependent RNA polymerase catalyzes the transcription of DNA into RNA using the four ribonucleoside triphosphates as substrates. Specific core component of RNA polymerase III which synthesizes small RNAs, such as 5S rRNA and tRNAs. The sequence is that of DNA-directed RNA polymerase III subunit RPC3 (RPC82) from Saccharomyces cerevisiae (strain YJM789) (Baker's yeast).